Consider the following 220-residue polypeptide: uncharacterized protein (220 aa).

Transmembrane regions (helical) follow at residues 61–81 (LISVLTIPFYVAIIIFISFFG), 85–105 (SVMFSVIILGSVLISTCYGAF), 115–135 (FVIIQLVFLIYDLILITILLL), and 150–170 (LPLEDIPFGTDQVLLGCSLLL).

It is found in the membrane. This is an uncharacterized protein from Caenorhabditis elegans.